The sequence spans 197 residues: ATP-dependent Clp protease proteolytic subunit (197 aa).

Catalysis depends on Ser97, which acts as the Nucleophile. His122 is an active-site residue.

It belongs to the peptidase S14 family. Fourteen ClpP subunits assemble into 2 heptameric rings which stack back to back to give a disk-like structure with a central cavity, resembling the structure of eukaryotic proteasomes.

The protein localises to the cytoplasm. The enzyme catalyses Hydrolysis of proteins to small peptides in the presence of ATP and magnesium. alpha-casein is the usual test substrate. In the absence of ATP, only oligopeptides shorter than five residues are hydrolyzed (such as succinyl-Leu-Tyr-|-NHMec, and Leu-Tyr-Leu-|-Tyr-Trp, in which cleavage of the -Tyr-|-Leu- and -Tyr-|-Trp bonds also occurs).. Its function is as follows. Cleaves peptides in various proteins in a process that requires ATP hydrolysis. Has a chymotrypsin-like activity. Plays a major role in the degradation of misfolded proteins. In Trichlorobacter lovleyi (strain ATCC BAA-1151 / DSM 17278 / SZ) (Geobacter lovleyi), this protein is ATP-dependent Clp protease proteolytic subunit.